A 252-amino-acid polypeptide reads, in one-letter code: Adenosylcobinamide-GDP ribazoletransferase (252 aa).

7 consecutive transmembrane segments (helical) span residues 35–55 (AMLPLIGLIVGCIQWVVFYIL), 58–78 (IFPANITAIFIILVGMVLIGG), 113–133 (FAVLALIFDILIKYSALSFII), 139–159 (YAIIITPIMSRCTLVFLFLIG), 170–190 (LFIENVSVKEFIISFIFMIVP), 192–212 (VLLIGYKYSVIIIVVSFIITL), and 231–251 (GANNEIVEMFTMLVFVALLYI).

The protein belongs to the CobS family. Mg(2+) serves as cofactor.

It is found in the cell membrane. It carries out the reaction alpha-ribazole + adenosylcob(III)inamide-GDP = adenosylcob(III)alamin + GMP + H(+). The catalysed reaction is alpha-ribazole 5'-phosphate + adenosylcob(III)inamide-GDP = adenosylcob(III)alamin 5'-phosphate + GMP + H(+). It participates in cofactor biosynthesis; adenosylcobalamin biosynthesis; adenosylcobalamin from cob(II)yrinate a,c-diamide: step 7/7. In terms of biological role, joins adenosylcobinamide-GDP and alpha-ribazole to generate adenosylcobalamin (Ado-cobalamin). Also synthesizes adenosylcobalamin 5'-phosphate from adenosylcobinamide-GDP and alpha-ribazole 5'-phosphate. The sequence is that of Adenosylcobinamide-GDP ribazoletransferase from Clostridium tetani (strain Massachusetts / E88).